The primary structure comprises 181 residues: RNA pyrophosphohydrolase (181 aa).

The region spanning 6–150 is the Nudix hydrolase domain; sequence GYRPNVGIII…KCEVYRCALK (145 aa). The Nudix box motif lies at 38 to 59; it reads GGIKEGETPEQAMYRELYEEVG.

Belongs to the Nudix hydrolase family. RppH subfamily. It depends on a divalent metal cation as a cofactor.

Its function is as follows. Accelerates the degradation of transcripts by removing pyrophosphate from the 5'-end of triphosphorylated RNA, leading to a more labile monophosphorylated state that can stimulate subsequent ribonuclease cleavage. This Psychromonas ingrahamii (strain DSM 17664 / CCUG 51855 / 37) protein is RNA pyrophosphohydrolase.